The following is a 76-amino-acid chain: Secreted RxLR effector protein 31 (76 aa).

The N-terminal stretch at 1–24 (MRHCACLFHLFLIGFLCNVYFSAC) is a signal peptide. Residues 49–64 (RILRANDSEFLLTEER) carry the RxLR-dEER motif. Residue asparagine 54 is glycosylated (N-linked (GlcNAc...) asparagine).

The protein belongs to the RxLR effector family.

The protein resides in the secreted. The protein localises to the host nucleus. Its subcellular location is the host cytoplasm. In terms of biological role, secreted effector that dos not suppress the host cell death induced by cell death-inducing proteins. The sequence is that of Secreted RxLR effector protein 31 from Plasmopara viticola (Downy mildew of grapevine).